A 258-amino-acid chain; its full sequence is 6-phosphogluconolactonase (258 aa).

A2 bears the N-acetylalanine mark. Residue S49 is modified to Phosphoserine. K180 is subject to N6-acetyllysine.

The protein belongs to the glucosamine/galactosamine-6-phosphate isomerase family. 6-phosphogluconolactonase subfamily.

Its subcellular location is the cytoplasm. The catalysed reaction is 6-phospho-D-glucono-1,5-lactone + H2O = 6-phospho-D-gluconate + H(+). Its pathway is carbohydrate degradation; pentose phosphate pathway; D-ribulose 5-phosphate from D-glucose 6-phosphate (oxidative stage): step 2/3. Functionally, hydrolysis of 6-phosphogluconolactone to 6-phosphogluconate. The protein is 6-phosphogluconolactonase (PGLS) of Bos taurus (Bovine).